The chain runs to 606 residues: NADH-ubiquinone oxidoreductase chain 5 (606 aa).

16 consecutive transmembrane segments (helical) span residues 1 to 21 (MNLFTSFVLLTLLILFTPIMV), 35 to 55 (YVKNIVFCAFITSLIPAMMYL), 87 to 107 (LMFMPVALFITWSIMEFSMWY), 114 to 134 (INQFFKYLLLFLITMLILVTA), 140 to 160 (LFIGWEGVGIMSFLLIGWWFG), 171 to 191 (AILYNRIGDIGLLASMAWFLS), 211 to 233 (FPLMGLVLAAAGKSAQFGLHPWL), 241 to 261 (TPVSALLHSSTMVVAGIFLLV), 272 to 292 (LIQTVTLCLGAITTLFTAICA), 301 to 320 (IIAFSTSSQLGLMMVTIGLN), 325 to 347 (AFLHICTHAFFKAMLFLCSGSII), 366 to 386 (LPFTTTALIIGCLALTGMPFL), 413 to 433 (LTATSLTAVYSTRIIFFALLG), 457 to 477 (LLIGSIFAGFILSNSIPPVIT), 482 to 502 (MPLHLKLTALTMTTLGFIIAF), and 582 to 602 (GLIKLYFLSFLITITLSMILF).

This sequence belongs to the complex I subunit 5 family. As to quaternary structure, core subunit of respiratory chain NADH dehydrogenase (Complex I) which is composed of 45 different subunits.

Its subcellular location is the mitochondrion inner membrane. It catalyses the reaction a ubiquinone + NADH + 5 H(+)(in) = a ubiquinol + NAD(+) + 4 H(+)(out). Functionally, core subunit of the mitochondrial membrane respiratory chain NADH dehydrogenase (Complex I) which catalyzes electron transfer from NADH through the respiratory chain, using ubiquinone as an electron acceptor. Essential for the catalytic activity and assembly of complex I. This Balaenoptera musculus (Blue whale) protein is NADH-ubiquinone oxidoreductase chain 5 (MT-ND5).